The following is a 707-amino-acid chain: Elongation factor G (707 aa).

A tr-type G domain is found at 8–297; that stretch reads ERVRNIGIAA…AVVDYLPSPV (290 aa). GTP is bound by residues 17 to 24, 96 to 100, and 150 to 153; these read AHIDAGKT, DTPGH, and NKMD.

Belongs to the TRAFAC class translation factor GTPase superfamily. Classic translation factor GTPase family. EF-G/EF-2 subfamily.

The protein resides in the cytoplasm. In terms of biological role, catalyzes the GTP-dependent ribosomal translocation step during translation elongation. During this step, the ribosome changes from the pre-translocational (PRE) to the post-translocational (POST) state as the newly formed A-site-bound peptidyl-tRNA and P-site-bound deacylated tRNA move to the P and E sites, respectively. Catalyzes the coordinated movement of the two tRNA molecules, the mRNA and conformational changes in the ribosome. This Synechococcus sp. (strain JA-2-3B'a(2-13)) (Cyanobacteria bacterium Yellowstone B-Prime) protein is Elongation factor G.